We begin with the raw amino-acid sequence, 449 residues long: UDP-N-acetylmuramoyl-tripeptide--D-alanyl-D-alanine ligase (449 aa).

106 to 112 (GSVGKTS) contributes to the ATP binding site.

Belongs to the MurCDEF family. MurF subfamily.

It is found in the cytoplasm. The catalysed reaction is D-alanyl-D-alanine + UDP-N-acetyl-alpha-D-muramoyl-L-alanyl-gamma-D-glutamyl-meso-2,6-diaminopimelate + ATP = UDP-N-acetyl-alpha-D-muramoyl-L-alanyl-gamma-D-glutamyl-meso-2,6-diaminopimeloyl-D-alanyl-D-alanine + ADP + phosphate + H(+). It participates in cell wall biogenesis; peptidoglycan biosynthesis. In terms of biological role, involved in cell wall formation. Catalyzes the final step in the synthesis of UDP-N-acetylmuramoyl-pentapeptide, the precursor of murein. The protein is UDP-N-acetylmuramoyl-tripeptide--D-alanyl-D-alanine ligase of Rickettsia prowazekii (strain Madrid E).